A 114-amino-acid chain; its full sequence is rRNA-processing protein cgrA (114 aa).

Low complexity predominate over residues 1–13; the sequence is MSSAAPAPSTHAA. 2 disordered regions span residues 1 to 47 and 77 to 114; these read MSSA…AARK and RRAA…LLNS. The stretch at 40-101 forms a coiled coil; that stretch reads TKRAAARKEQ…EKMHRKRVER (62 aa). Positions 77-93 are enriched in basic and acidic residues; sequence RRAAKEEKERYEKMAEK. Positions 94 to 114 are enriched in basic residues; that stretch reads MHRKRVERLKKREKRNKLLNS.

This sequence belongs to the CGR1 family.

It is found in the nucleus. The protein localises to the nucleolus. Functionally, involved in nucleolar integrity and required for processing of the pre-rRNA for the 60S ribosome subunit. The chain is rRNA-processing protein cgrA (cgrA) from Emericella nidulans (strain FGSC A4 / ATCC 38163 / CBS 112.46 / NRRL 194 / M139) (Aspergillus nidulans).